Consider the following 72-residue polypeptide: Translation initiation factor IF-1 (72 aa).

Residues 1-72 (MAKEEAITVD…SKGRITYRKK (72 aa)) enclose the S1-like domain.

It belongs to the IF-1 family. As to quaternary structure, component of the 30S ribosomal translation pre-initiation complex which assembles on the 30S ribosome in the order IF-2 and IF-3, IF-1 and N-formylmethionyl-tRNA(fMet); mRNA recruitment can occur at any time during PIC assembly.

Its subcellular location is the cytoplasm. One of the essential components for the initiation of protein synthesis. Stabilizes the binding of IF-2 and IF-3 on the 30S subunit to which N-formylmethionyl-tRNA(fMet) subsequently binds. Helps modulate mRNA selection, yielding the 30S pre-initiation complex (PIC). Upon addition of the 50S ribosomal subunit IF-1, IF-2 and IF-3 are released leaving the mature 70S translation initiation complex. The chain is Translation initiation factor IF-1 from Leptospira borgpetersenii serovar Hardjo-bovis (strain L550).